The sequence spans 148 residues: MSKDGLSNDQVSSMKEAFMLFDTDGDGKIAPSELGILMRSLGGNPTESQLKSIITTENLSSPFDFNRFLDLMAKHLKTEPFDRQLRDAFKVLDKEGTGFVAVADLRHILTSIGEKLQPSEFDEWIKEVDVGSDGKIRYEDFIARMVAK.

3 EF-hand domains span residues 9 to 44, 80 to 115, and 116 to 148; these read DQVS…LGGN, PFDR…IGEK, and LQPS…MVAK. The Ca(2+) site is built by D22, D24, D26, K28, and E33.

Functionally, potential calcium sensor. This chain is Probable calcium-binding protein CML14 (CML14), found in Arabidopsis thaliana (Mouse-ear cress).